A 161-amino-acid polypeptide reads, in one-letter code: GTP-dependent dephospho-CoA kinase (161 aa).

GTP-binding residues include aspartate 37, isoleucine 38, aspartate 56, lysine 58, glutamate 112, and aspartate 135.

This sequence belongs to the GTP-dependent DPCK family.

It carries out the reaction 3'-dephospho-CoA + GTP = GDP + CoA + H(+). It participates in cofactor biosynthesis; coenzyme A biosynthesis. Functionally, catalyzes the GTP-dependent phosphorylation of the 3'-hydroxyl group of dephosphocoenzyme A to form coenzyme A (CoA). This chain is GTP-dependent dephospho-CoA kinase, found in Methanococcus aeolicus (strain ATCC BAA-1280 / DSM 17508 / OCM 812 / Nankai-3).